Here is a 110-residue protein sequence, read N- to C-terminus: MCAEPDDWERIERHPRKLKIAPRMLDFYESYIVWREGNFFLCLRSFPNGVIRGGRCFFRATSLPWKNVYGYHGHITSVCGATLTRINRAMVASDAGMGSIGLTNLFLYRV.

This is an uncharacterized protein from Saccharomyces cerevisiae (strain ATCC 204508 / S288c) (Baker's yeast).